A 211-amino-acid polypeptide reads, in one-letter code: tRNA (guanine-N(7)-)-methyltransferase (211 aa).

Positions 44, 69, 96, and 118 each coordinate S-adenosyl-L-methionine. Aspartate 118 is a catalytic residue. A substrate-binding site is contributed by lysine 122. Positions 124–129 (KHEKRR) are interaction with RNA. Residues aspartate 154 and 191–194 (TEYE) contribute to the substrate site.

The protein belongs to the class I-like SAM-binding methyltransferase superfamily. TrmB family.

It carries out the reaction guanosine(46) in tRNA + S-adenosyl-L-methionine = N(7)-methylguanosine(46) in tRNA + S-adenosyl-L-homocysteine. Its pathway is tRNA modification; N(7)-methylguanine-tRNA biosynthesis. Its function is as follows. Catalyzes the formation of N(7)-methylguanine at position 46 (m7G46) in tRNA. The polypeptide is tRNA (guanine-N(7)-)-methyltransferase (Streptococcus uberis (strain ATCC BAA-854 / 0140J)).